Consider the following 386-residue polypeptide: Homogentisate solanesyltransferase, chloroplastic (386 aa).

The transit peptide at Met-1 to Arg-69 directs the protein to the chloroplast. 8 helical membrane-spanning segments follow: residues Val-130–Ile-150, Leu-181–Ile-201, Leu-204–Leu-220, Phe-225–Val-245, Trp-259–Ile-279, Ile-306–Phe-326, Ser-335–Leu-355, and Ile-365–Phe-385.

The protein belongs to the UbiA prenyltransferase family.

It is found in the plastid. Its subcellular location is the chloroplast membrane. It carries out the reaction all-trans-nonaprenyl diphosphate + homogentisate + H(+) = 2-methyl-6-(all-trans-nonaprenyl)benzene-1,4-diol + CO2 + diphosphate. With respect to regulation, inhibited by haloxydine (3,5-dichloro-2,6-difluoro-4-haloxypyridine). Its function is as follows. Involved in the synthesis of plastoquinone-9. Can use both homogentisic acid and 2,5-dihydroxyphenylacetic acid gamma-lactone as prenyl acceptors, and solanesyl diphosphate &gt; farnesyl diphosphate &gt; geranylgeranyl diphosphate &gt;&gt; phytyl diphosphate as prenyl donors. Do not catalyze the decardoxylation of homogentisate uncoupled from prenylation. This Arabidopsis thaliana (Mouse-ear cress) protein is Homogentisate solanesyltransferase, chloroplastic (HST).